A 354-amino-acid chain; its full sequence is Glycine betaine/proline betaine transport system permease protein ProW (354 aa).

The interval Met1–Ala28 is disordered. Over Met1–Gln99 the chain is Cytoplasmic. The span at Asp9–Ala23 shows a compositional bias: low complexity. A helical membrane pass occupies residues Leu100 to Val120. A topological domain (periplasmic) is located at residue Ser121. Residues Gly122–Trp142 form a helical membrane-spanning segment. Residues Ser143 to Thr148 lie on the Cytoplasmic side of the membrane. The region spanning Ala145–Thr324 is the ABC transmembrane type-1 domain. A helical membrane pass occupies residues Leu149–Trp169. Residues Leu170–Pro198 are Periplasmic-facing. The helical transmembrane segment at Ile199 to Leu219 threads the bilayer. At Pro220–Gln270 the chain is on the cytoplasmic side. A helical membrane pass occupies residues Thr271 to Gly291. The Periplasmic portion of the chain corresponds to Gln292–Arg300. A helical membrane pass occupies residues Leu301–Asp321. Residues Arg322–Lys354 are Cytoplasmic-facing.

It belongs to the binding-protein-dependent transport system permease family. CysTW subfamily. The complex is composed of two ATP-binding proteins (ProV), two transmembrane proteins (ProW) and a solute-binding protein (ProX).

It is found in the cell inner membrane. In terms of biological role, part of the ProU ABC transporter complex involved in glycine betaine and proline betaine uptake. Probably responsible for the translocation of the substrate across the membrane. This Salmonella typhimurium (strain LT2 / SGSC1412 / ATCC 700720) protein is Glycine betaine/proline betaine transport system permease protein ProW.